Here is a 138-residue protein sequence, read N- to C-terminus: Transcription antitermination protein NusB (138 aa).

The protein belongs to the NusB family.

Involved in transcription antitermination. Required for transcription of ribosomal RNA (rRNA) genes. Binds specifically to the boxA antiterminator sequence of the ribosomal RNA (rrn) operons. This Blochmanniella floridana protein is Transcription antitermination protein NusB.